Reading from the N-terminus, the 125-residue chain is Glycine cleavage system H protein (125 aa).

Residues 19-101 enclose the Lipoyl-binding domain; it reads VGTVGISDYA…EGAAWFFKLT (83 aa). K60 carries the post-translational modification N6-lipoyllysine.

The protein belongs to the GcvH family. The glycine cleavage system is composed of four proteins: P, T, L and H. The cofactor is (R)-lipoate.

In terms of biological role, the glycine cleavage system catalyzes the degradation of glycine. The H protein shuttles the methylamine group of glycine from the P protein to the T protein. The protein is Glycine cleavage system H protein of Paramagnetospirillum magneticum (strain ATCC 700264 / AMB-1) (Magnetospirillum magneticum).